Reading from the N-terminus, the 452-residue chain is Isocitrate dehydrogenase [NADP], mitochondrial (452 aa).

The transit peptide at 1 to 39 (MAGYLRAVSSLCRASGSARTWAPAALTVPSWPEQPRRHY) directs the protein to the mitochondrion. Residues lysine 45, lysine 48, lysine 67, and lysine 69 each carry the N6-acetyllysine modification. N6-acetyllysine; alternate occurs at positions 80 and 106. An N6-succinyllysine; alternate mark is found at lysine 80 and lysine 106. NADP(+) contacts are provided by residues 115-117 (TIT) and arginine 122. Threonine 117 contacts D-threo-isocitrate. Residues 134-140 (SPNGTIR) and arginine 149 each bind D-threo-isocitrate. The residue at position 155 (lysine 155) is an N6-acetyllysine. An N6-acetyllysine; alternate modification is found at lysine 166. Lysine 166 is modified (N6-succinyllysine; alternate). Position 172 (arginine 172) interacts with D-threo-isocitrate. Lysine 180 and lysine 193 each carry N6-acetyllysine; alternate. An N6-succinyllysine; alternate mark is found at lysine 180 and lysine 193. Position 199 is an N6-acetyllysine (lysine 199). Lysine 256 carries the post-translational modification N6-acetyllysine; alternate. At lysine 256 the chain carries N6-succinyllysine; alternate. Lysine 263, lysine 272, lysine 275, and lysine 280 each carry N6-acetyllysine. Lysine 282 carries the post-translational modification N6-acetyllysine; alternate. An N6-succinyllysine; alternate modification is found at lysine 282. Aspartate 291 provides a ligand contact to Mn(2+). Lysine 299 serves as a coordination point for NADP(+). Residue aspartate 314 participates in Mn(2+) binding. Residues 349-354 (GTVTRH) and asparagine 367 contribute to the NADP(+) site. Residue lysine 384 is modified to N6-acetyllysine; alternate. Lysine 384 carries the N6-succinyllysine; alternate modification. N6-acetyllysine is present on residues lysine 400, lysine 413, and lysine 442.

The protein belongs to the isocitrate and isopropylmalate dehydrogenases family. Homodimer. The cofactor is Mg(2+). Mn(2+) is required as a cofactor. Acetylation at Lys-413 dramatically reduces catalytic activity. Deacetylated by SIRT3. As to expression, predominantly expressed in heart, liver and kidney. Expressed in activated B lymphocytes.

Its subcellular location is the mitochondrion. The catalysed reaction is D-threo-isocitrate + NADP(+) = 2-oxoglutarate + CO2 + NADPH. Functionally, plays a role in intermediary metabolism and energy production. It may tightly associate or interact with the pyruvate dehydrogenase complex. This is Isocitrate dehydrogenase [NADP], mitochondrial (Idh2) from Mus musculus (Mouse).